We begin with the raw amino-acid sequence, 65 residues long: Large ribosomal subunit protein bL32 (65 aa).

The span at 1 to 19 shows a compositional bias: basic residues; it reads MAIVPKRKTSKQRKHKRQS. The segment at 1 to 21 is disordered; it reads MAIVPKRKTSKQRKHKRQSHS.

The protein belongs to the bacterial ribosomal protein bL32 family.

The polypeptide is Large ribosomal subunit protein bL32 (Mesomycoplasma hyopneumoniae (strain 7448) (Mycoplasma hyopneumoniae)).